The chain runs to 212 residues: Root-specific lectin (212 aa).

Residues M1–A26 form the signal peptide. Q27 carries the pyrrolidone carboxylic acid modification. Chitin-binding type-1 domains follow at residues Q27 to T68, S69 to A111, D112 to T154, and D155 to G197. Disulfide bonds link C29–C44, C38–C50, C43–C57, C61–C66, C72–C87, C81–C93, C86–C100, C104–C109, C115–C130, C124–C136, C129–C143, C147–C152, C158–C173, C167–C179, C172–C186, and C190–C195. A substrate-binding site is contributed by M36–C38. Substrate is bound at residue S88–Y99. S140–E141 serves as a coordination point for substrate. A glycan (N-linked (GlcNAc...) asparagine) is linked at N206.

As to expression, in roots.

Its function is as follows. Carbohydrate binding. The polypeptide is Root-specific lectin (Hordeum vulgare (Barley)).